Consider the following 273-residue polypeptide: ATP synthase subunit delta (273 aa).

This sequence belongs to the ATPase delta chain family. In terms of assembly, F-type ATPases have 2 components, F(1) - the catalytic core - and F(0) - the membrane proton channel. F(1) has five subunits: alpha(3), beta(3), gamma(1), delta(1), epsilon(1). F(0) has three main subunits: a(1), b(2) and c(10-14). The alpha and beta chains form an alternating ring which encloses part of the gamma chain. F(1) is attached to F(0) by a central stalk formed by the gamma and epsilon chains, while a peripheral stalk is formed by the delta and b chains.

The protein localises to the cell membrane. F(1)F(0) ATP synthase produces ATP from ADP in the presence of a proton or sodium gradient. F-type ATPases consist of two structural domains, F(1) containing the extramembraneous catalytic core and F(0) containing the membrane proton channel, linked together by a central stalk and a peripheral stalk. During catalysis, ATP synthesis in the catalytic domain of F(1) is coupled via a rotary mechanism of the central stalk subunits to proton translocation. Functionally, this protein is part of the stalk that links CF(0) to CF(1). It either transmits conformational changes from CF(0) to CF(1) or is implicated in proton conduction. In Streptomyces avermitilis (strain ATCC 31267 / DSM 46492 / JCM 5070 / NBRC 14893 / NCIMB 12804 / NRRL 8165 / MA-4680), this protein is ATP synthase subunit delta.